Reading from the N-terminus, the 259-residue chain is Ribosome maturation factor RimP (259 aa).

Basic and acidic residues predominate over residues 186-195 (RGKQAERELK). The interval 186-259 (RGKQAERELK…RGDTDLSEGD (74 aa)) is disordered. Residues 239 to 248 (KQHRLAAGRS) show a composition bias toward basic residues.

It belongs to the RimP family.

The protein localises to the cytoplasm. In terms of biological role, required for maturation of 30S ribosomal subunits. The protein is Ribosome maturation factor RimP of Rhodopseudomonas palustris (strain HaA2).